The chain runs to 347 residues: Histidinol-phosphate aminotransferase (347 aa).

N6-(pyridoxal phosphate)lysine is present on lysine 209.

Belongs to the class-II pyridoxal-phosphate-dependent aminotransferase family. Histidinol-phosphate aminotransferase subfamily. Homodimer. Pyridoxal 5'-phosphate is required as a cofactor.

The enzyme catalyses L-histidinol phosphate + 2-oxoglutarate = 3-(imidazol-4-yl)-2-oxopropyl phosphate + L-glutamate. Its pathway is amino-acid biosynthesis; L-histidine biosynthesis; L-histidine from 5-phospho-alpha-D-ribose 1-diphosphate: step 7/9. In Syntrophotalea carbinolica (strain DSM 2380 / NBRC 103641 / GraBd1) (Pelobacter carbinolicus), this protein is Histidinol-phosphate aminotransferase.